A 71-amino-acid polypeptide reads, in one-letter code: Translational regulator CsrA (71 aa).

This sequence belongs to the CsrA/RsmA family. In terms of assembly, homodimer; the beta-strands of each monomer intercalate to form a hydrophobic core, while the alpha-helices form wings that extend away from the core.

The protein localises to the cytoplasm. Its function is as follows. A key translational regulator that binds mRNA to regulate translation initiation and/or mRNA stability. Mediates global changes in gene expression, shifting from rapid growth to stress survival by linking envelope stress, the stringent response and the catabolite repression systems. Usually binds in the 5'-UTR; binding at or near the Shine-Dalgarno sequence prevents ribosome-binding, repressing translation, binding elsewhere in the 5'-UTR can activate translation and/or stabilize the mRNA. Its function is antagonized by small RNA(s). This is Translational regulator CsrA from Pseudoalteromonas atlantica (strain T6c / ATCC BAA-1087).